Consider the following 432-residue polypeptide: D-amino acid dehydrogenase (432 aa).

An FAD-binding site is contributed by 3–17 (VVILGSGVVGVASAW).

It belongs to the DadA oxidoreductase family. FAD is required as a cofactor.

The enzyme catalyses a D-alpha-amino acid + A + H2O = a 2-oxocarboxylate + AH2 + NH4(+). It functions in the pathway amino-acid degradation; D-alanine degradation; NH(3) and pyruvate from D-alanine: step 1/1. Its function is as follows. Oxidative deamination of D-amino acids. This Shigella boydii serotype 18 (strain CDC 3083-94 / BS512) protein is D-amino acid dehydrogenase.